The sequence spans 54 residues: MTRNEIRPIVKLRSTAGTGYTYVTRKNRRNDPDRIVLRKYDPVVRRHVDFREDR.

It belongs to the bacterial ribosomal protein bL33 family.

This Mycolicibacterium gilvum (strain PYR-GCK) (Mycobacterium gilvum (strain PYR-GCK)) protein is Large ribosomal subunit protein bL33A.